A 703-amino-acid polypeptide reads, in one-letter code: Phenylalanine aminomutase (L-beta-phenylalanine forming) (703 aa).

Tyr-79 acts as the Proton donor/acceptor in catalysis. Positions Ala-177–Gly-179 form a cross-link, 5-imidazolinone (Ala-Gly). At Ser-178 the chain carries 2,3-didehydroalanine (Ser).

The protein belongs to the PAL/histidase family. Contains an active site 4-methylidene-imidazol-5-one (MIO), which is formed autocatalytically by cyclization and dehydration of residues Ala-Ser-Gly.

It catalyses the reaction L-phenylalanine = L-beta-phenylalanine. It functions in the pathway mycotoxin biosynthesis. Phenylalanine aminomutase; part of the gene cluster that mediates the biosynthesis of the mycotoxin cyclochlorotine, a hepatotoxic and carcinogenic cyclic chlorinated pentapeptide. Within the pathway, cctP1 provides the uncommon building block beta-Phe from Phe. The NRPS cctN initially catalyzes the condensation of L-serine (Ser), Pro, L-2-aminobutyrate (2Abu), Ser, and beta-Phe in this order to produce isocyclotine. After the dichlorination of Pro2 catalyzed by cctP2 to produce isocyclochlorotine, the cctO-mediated transacylation of isocyclochlorotine can furnish cyclochlorotine. The subsequent hydroxylation of cyclochlorotine by cctR yields hydroxycyclochlorotine as the final product. CctP1 probably acts as a phenylalanine aminomutase and provides the uncommon building block beta-Phe. Furthermore, 2Abu can be synthesized from threonine by one of the threonine dehydratases and transaminases localized outside of the cluster. The functions of the remaining proteins encoded by the cluster, cctM and cctT, have not been identified yet. The sequence is that of Phenylalanine aminomutase (L-beta-phenylalanine forming) from Talaromyces islandicus (Penicillium islandicum).